The chain runs to 262 residues: 3-methyl-2-oxobutanoate hydroxymethyltransferase (262 aa).

2 residues coordinate Mg(2+): Asp43 and Asp82. Residues 43–44 (DS), Asp82, and Lys111 contribute to the 3-methyl-2-oxobutanoate site. Glu113 is a Mg(2+) binding site. The active-site Proton acceptor is the Glu180.

The protein belongs to the PanB family. As to quaternary structure, homodecamer; pentamer of dimers. The cofactor is Mg(2+).

The protein resides in the cytoplasm. The catalysed reaction is 3-methyl-2-oxobutanoate + (6R)-5,10-methylene-5,6,7,8-tetrahydrofolate + H2O = 2-dehydropantoate + (6S)-5,6,7,8-tetrahydrofolate. The protein operates within cofactor biosynthesis; (R)-pantothenate biosynthesis; (R)-pantoate from 3-methyl-2-oxobutanoate: step 1/2. Catalyzes the reversible reaction in which hydroxymethyl group from 5,10-methylenetetrahydrofolate is transferred onto alpha-ketoisovalerate to form ketopantoate. This chain is 3-methyl-2-oxobutanoate hydroxymethyltransferase, found in Wolinella succinogenes (strain ATCC 29543 / DSM 1740 / CCUG 13145 / JCM 31913 / LMG 7466 / NCTC 11488 / FDC 602W) (Vibrio succinogenes).